The following is a 172-amino-acid chain: Stellate protein CG33238 (172 aa).

Belongs to the casein kinase 2 subunit beta family. In terms of assembly, interacts in vitro with the casein kinase 2 alpha subunit (CkII-alpha). The relevance of such interaction is however unclear in vivo. In terms of tissue distribution, probably not expressed in wild-type flies. In males lacking the Y chromosome, it is testis-specific and constitutes the main component of star-shaped crystals.

Functionally, unknown. In males lacking the Y chromosome, its strong overexpression leads to the appearance of proteinaceous star-shaped crystals in the primary spermatocytes causing meiotic drive, possibly by interfering with normal casein kinase 2 activity. The polypeptide is Stellate protein CG33238 (Ste:CG33238) (Drosophila melanogaster (Fruit fly)).